Reading from the N-terminus, the 79-residue chain is Serine protease inhibitor Kazal-type 1-like (79 aa).

The first 23 residues, 1-23 (MKVAIIFLLSALALLNLAGNTTA), serve as a signal peptide directing secretion. The Kazal-like domain occupies 26–79 (IGKKANCPNTLVGCPRDYDPVCGTDGKTYANECILCFENRKFGTSIRIQRRGLC). 3 disulfides stabilise this stretch: Cys32–Cys61, Cys39–Cys58, and Cys47–Cys79.

Seminal vesicle.

Its subcellular location is the secreted. Its function is as follows. Serine protease inhibitor which exhibits anti-trypsin activity. In the pancreas, protects against trypsin-catalyzed premature activation of zymogens. In the male reproductive tract, binds to sperm heads where it modulates sperm capacitance by inhibiting calcium uptake and nitrogen oxide (NO) production. This Rattus norvegicus (Rat) protein is Serine protease inhibitor Kazal-type 1-like.